A 356-amino-acid polypeptide reads, in one-letter code: Growth hormone-regulated TBC protein 1-A (356 aa).

The disordered stretch occupies residues 1–29 (MEERDRTGRTGQPQHRINQPSTARERANS). A compositionally biased stretch (polar residues) spans 9 to 22 (RTGQPQHRINQPST). In terms of domain architecture, Rab-GAP TBC spans 87-277 (GVPNEHRPLV…RIWDCLFYEG (191 aa)).

In terms of biological role, may act as a GTPase-activating protein for Rab family protein(s). The sequence is that of Growth hormone-regulated TBC protein 1-A (grtp1a) from Danio rerio (Zebrafish).